Consider the following 663-residue polypeptide: UvrABC system protein B (663 aa).

One can recognise a Helicase ATP-binding domain in the interval 26-414; the sequence is DGLESGLAKQ…DNVAEQVVRP (389 aa). 39 to 46 serves as a coordination point for ATP; the sequence is GVTGSGKT. The Beta-hairpin motif lies at 92 to 115; sequence YYDYYQPEAYVPASDTFIEKDASI. Positions 430 to 596 constitute a Helicase C-terminal domain; sequence QVDDLMSEIR…GINKSVEDIL (167 aa). Residues 624–659 form the UVR domain; it reads AKEINALEKQMYAHAQNMEFELAAKIRDEYLLLKEQ.

This sequence belongs to the UvrB family. Forms a heterotetramer with UvrA during the search for lesions. Interacts with UvrC in an incision complex.

The protein localises to the cytoplasm. The UvrABC repair system catalyzes the recognition and processing of DNA lesions. A damage recognition complex composed of 2 UvrA and 2 UvrB subunits scans DNA for abnormalities. Upon binding of the UvrA(2)B(2) complex to a putative damaged site, the DNA wraps around one UvrB monomer. DNA wrap is dependent on ATP binding by UvrB and probably causes local melting of the DNA helix, facilitating insertion of UvrB beta-hairpin between the DNA strands. Then UvrB probes one DNA strand for the presence of a lesion. If a lesion is found the UvrA subunits dissociate and the UvrB-DNA preincision complex is formed. This complex is subsequently bound by UvrC and the second UvrB is released. If no lesion is found, the DNA wraps around the other UvrB subunit that will check the other stand for damage. The polypeptide is UvrABC system protein B (Legionella pneumophila (strain Paris)).